The following is a 74-amino-acid chain: ATP synthase subunit c (74 aa).

Transmembrane regions (helical) follow at residues 5-25 and 49-69; these read LAHI…IGVG and LFIG…VALL.

It belongs to the ATPase C chain family. F-type ATPases have 2 components, F(1) - the catalytic core - and F(0) - the membrane proton channel. F(1) has five subunits: alpha(3), beta(3), gamma(1), delta(1), epsilon(1). F(0) has four main subunits: a(1), b(1), b'(1) and c(10-14). The alpha and beta chains form an alternating ring which encloses part of the gamma chain. F(1) is attached to F(0) by a central stalk formed by the gamma and epsilon chains, while a peripheral stalk is formed by the delta, b and b' chains.

It is found in the cell inner membrane. F(1)F(0) ATP synthase produces ATP from ADP in the presence of a proton or sodium gradient. F-type ATPases consist of two structural domains, F(1) containing the extramembraneous catalytic core and F(0) containing the membrane proton channel, linked together by a central stalk and a peripheral stalk. During catalysis, ATP synthesis in the catalytic domain of F(1) is coupled via a rotary mechanism of the central stalk subunits to proton translocation. In terms of biological role, key component of the F(0) channel; it plays a direct role in translocation across the membrane. A homomeric c-ring of between 10-14 subunits forms the central stalk rotor element with the F(1) delta and epsilon subunits. The sequence is that of ATP synthase subunit c from Roseobacter denitrificans (strain ATCC 33942 / OCh 114) (Erythrobacter sp. (strain OCh 114)).